We begin with the raw amino-acid sequence, 660 residues long: Peroxisomal acyl-coenzyme A oxidase 1 (660 aa).

A Phosphoserine modification is found at Ser-26. 2 positions are modified to N6-succinyllysine: Lys-89 and Lys-90. Positions 139 and 178 each coordinate FAD. Lys-216 bears the N6-acetyllysine mark. Lys-241 bears the N6-succinyllysine mark. An N6-acetyllysine mark is found at Lys-255, Lys-267, and Lys-272. The residue at position 349 (Lys-349) is an N6-succinyllysine. The active-site Proton acceptor is the Glu-421. Lys-437 and Lys-446 each carry N6-acetyllysine; alternate. N6-succinyllysine; alternate is present on residues Lys-437 and Lys-446. N6-acetyllysine occurs at positions 500 and 504. Position 512 is an N6-acetyllysine; alternate (Lys-512). Position 512 is an N6-succinyllysine; alternate (Lys-512). N6-succinyllysine is present on Lys-542. At Lys-637 the chain carries N6-acetyllysine; alternate. Lys-637 is modified (N6-succinyllysine; alternate). Lys-643 carries the N6-succinyllysine modification. Position 649 is a phosphoserine (Ser-649). Residue Lys-651 is modified to N6-acetyllysine. Lys-654 bears the N6-succinyllysine mark. Residues 658–660 (SKL) carry the Microbody targeting signal motif.

This sequence belongs to the acyl-CoA oxidase family. As to quaternary structure, homodimer. Interacts with LONP2. Requires FAD as cofactor. Widely expressed with highest levels of isoform 1 and isoform 2 detected in testis. Isoform 1 is expressed at higher levels than isoform 2 in liver and kidney while isoform 2 levels are higher in brain, lung, muscle, white adipose tissue and testis. Levels are almost equal in heart.

The protein resides in the peroxisome. It catalyses the reaction a 2,3-saturated acyl-CoA + O2 = a (2E)-enoyl-CoA + H2O2. The enzyme catalyses hexadecanoyl-CoA + O2 = (2E)-hexadecenoyl-CoA + H2O2. It carries out the reaction dodecanoyl-CoA + O2 = (2E)-dodecenoyl-CoA + H2O2. The catalysed reaction is octanoyl-CoA + O2 = (2E)-octenoyl-CoA + H2O2. It catalyses the reaction decanoyl-CoA + O2 = (2E)-decenoyl-CoA + H2O2. The enzyme catalyses tetradecanoyl-CoA + O2 = (2E)-tetradecenoyl-CoA + H2O2. It carries out the reaction hexadecanedioyl-CoA + O2 = (2E)-hexadecenedioyl-CoA + H2O2. The catalysed reaction is (5Z,8Z,11Z,14Z,17Z)-eicosapentaenoyl-CoA + O2 = (2E,5Z,8Z,11Z,14Z,17Z)-icosahexaenoyl-CoA + H2O2. It catalyses the reaction tetracosanoyl-CoA + O2 = (2E)-tetracosenoyl-CoA + H2O2. The enzyme catalyses glutaryl-CoA + O2 = (2E)-glutaconyl-CoA + H2O2. It carries out the reaction hexanoyl-CoA + O2 = (2E)-hexenoyl-CoA + H2O2. The catalysed reaction is octadecanoyl-CoA + O2 = (2E)-octadecenoyl-CoA + H2O2. It catalyses the reaction (6Z,9Z,12Z,15Z,18Z,21Z)-tetracosahexaenoyl-CoA + O2 = (2E,6Z,9Z,12Z,15Z,18Z,21Z)-tetracosaheptaenoyl-CoA + H2O2. It functions in the pathway lipid metabolism; peroxisomal fatty acid beta-oxidation. Involved in the initial and rate-limiting step of peroxisomal beta-oxidation of straight-chain saturated and unsaturated very-long-chain fatty acids. Catalyzes the desaturation of fatty acyl-CoAs such as palmitoyl-CoA (hexadecanoyl-CoA) to 2-trans-enoyl-CoAs ((2E)-enoyl-CoAs) such as (2E)-hexadecenoyl-CoA, and donates electrons directly to molecular oxygen (O(2)), thereby producing hydrogen peroxide (H(2)O(2)). In terms of biological role, shows highest activity against medium-chain fatty acyl-CoAs. Shows optimum activity with a chain length of 10 carbons (decanoyl-CoA) in vitro. Its function is as follows. Is active against a much broader range of substrates and shows activity towards long-chain fatty acyl-CoAs. This is Peroxisomal acyl-coenzyme A oxidase 1 from Homo sapiens (Human).